Here is a 291-residue protein sequence, read N- to C-terminus: Small ribosomal subunit biogenesis GTPase RsgA (291 aa).

In terms of domain architecture, CP-type G spans 63–221; the sequence is QNELKRPPVS…VADTPGFSAL (159 aa). GTP contacts are provided by residues 112–115 and 164–172; these read TKKD and GQSGVGKST. Zn(2+) is bound by residues Cys245, Cys250, His252, and Cys258.

Belongs to the TRAFAC class YlqF/YawG GTPase family. RsgA subfamily. Monomer. Associates with 30S ribosomal subunit, binds 16S rRNA. Zn(2+) is required as a cofactor.

The protein resides in the cytoplasm. One of several proteins that assist in the late maturation steps of the functional core of the 30S ribosomal subunit. Helps release RbfA from mature subunits. May play a role in the assembly of ribosomal proteins into the subunit. Circularly permuted GTPase that catalyzes slow GTP hydrolysis, GTPase activity is stimulated by the 30S ribosomal subunit. The sequence is that of Small ribosomal subunit biogenesis GTPase RsgA from Staphylococcus carnosus (strain TM300).